A 542-amino-acid chain; its full sequence is E3 ubiquitin-protein ligase RNF217 (542 aa).

Disordered regions lie at residues 1 to 140 and 176 to 216; these read MGEE…TRVG and APAS…TDSL. Over residues 37–50 the composition is skewed to low complexity; it reads SARAPPLRAASAEP. Over residues 122–132 the composition is skewed to acidic residues; sequence DEQQEAPPGEE. Residues 185-196 show a composition bias toward pro residues; it reads PASPPGAPPVLN. Low complexity predominate over residues 197-213; it reads PPSTRSSFPSPRLSLPT. Residues 259–478 form a TRIAD supradomain region; the sequence is MVLMCRVCLE…LSIFGCKYRY (220 aa). Residues cysteine 263, cysteine 266, cysteine 283, cysteine 286, cysteine 383, cysteine 386, histidine 391, cysteine 396, cysteine 423, and cysteine 426 each coordinate Zn(2+). The segment at 263–309 adopts an RING-type 1 zinc-finger fold; that stretch reads CRVCLEDKPIKPLPCCKKAVCEECLKVYLSAQVQLGQVEIKCPITEC. The segment at 328–396 adopts an IBR-type zinc-finger fold; the sequence is IKYKYFLELG…HSPWHEGVNC (69 aa). The RING-type 2; atypical zinc-finger motif lies at 423–452; that stretch reads CPKCKIHIQRTEGCDHMTCSQCNTNFCYRC. Residue cysteine 436 is part of the active site. Cysteine 441, cysteine 444, cysteine 449, cysteine 452, histidine 465, and cysteine 474 together coordinate Zn(2+). A helical membrane pass occupies residues 503-523; it reads LIMVLGLALGAIAVVIGLFVF.

This sequence belongs to the RBR family. RNF217 subfamily. As to quaternary structure, interacts with HAX1. As to expression, mainly expressed in testis and skeletal muscle.

It localises to the membrane. The protein localises to the cytoplasm. The catalysed reaction is [E2 ubiquitin-conjugating enzyme]-S-ubiquitinyl-L-cysteine + [acceptor protein]-L-lysine = [E2 ubiquitin-conjugating enzyme]-L-cysteine + [acceptor protein]-N(6)-ubiquitinyl-L-lysine.. The protein operates within protein modification; protein ubiquitination. Functionally, E3 ubiquitin-protein ligase which accepts ubiquitin from E2 ubiquitin-conjugating enzymes in the form of a thioester and then directly transfers the ubiquitin to targeted substrates. Mediates the degradation of the iron exporter ferroportin/SLC40A1 and thus regulates iron homeostasis. This Homo sapiens (Human) protein is E3 ubiquitin-protein ligase RNF217 (RNF217).